We begin with the raw amino-acid sequence, 610 residues long: WD repeat-containing protein 46 (610 aa).

Residues 1-103 (METAPKPGKD…TQDPFPGPAP (103 aa)) form a disordered region. Over residues 7–19 (PGKDVPPKKDKLQ) the composition is skewed to basic and acidic residues. Phosphoserine is present on S41. The span at 65 to 77 (KKSRISKKPQVPK) shows a compositional bias: basic residues. WD repeat units lie at residues 193–234 (LRQF…CEIN), 235–272 (VMEA…LHCI), 274–312 (RCDR…IVAA), 315–354 (ARAG…PLAK), 357–396 (CHRG…QPLS), and 399–436 (TLPH…SPPS). A disordered region spans residues 538–610 (ERLGYDPQAK…RPSALDRFVR (73 aa)). Positions 572-582 (VMDEEHRDKVR) are enriched in basic and acidic residues.

Part of the small subunit (SSU) processome, composed of more than 70 proteins and the RNA chaperone small nucleolar RNA (snoRNA) U3. Interacts with DDX21, NCL, NOP2 and EBNA1BP2.

The protein resides in the nucleus. It localises to the nucleolus. Scaffold component of the nucleolar structure. Required for localization of DDX21 and NCL to the granular compartment of the nucleolus. Part of the small subunit (SSU) processome, first precursor of the small eukaryotic ribosomal subunit. During the assembly of the SSU processome in the nucleolus, many ribosome biogenesis factors, an RNA chaperone and ribosomal proteins associate with the nascent pre-rRNA and work in concert to generate RNA folding, modifications, rearrangements and cleavage as well as targeted degradation of pre-ribosomal RNA by the RNA exosome. The sequence is that of WD repeat-containing protein 46 (WDR46) from Homo sapiens (Human).